The primary structure comprises 351 residues: MTNLIDLTFHELESLIVSLGEPPYRARQVWQWLWQKRCREIAGMTDVSKALRARLEEVAEIRWPVVEMVRESRDGTVKFLLALDDGERVECVLIPEKDHYTACLSTQVGCAMGCGFCATGMLGFRRNMTPGEMLGQVLVGRQYLTDKGVELGLRNLVFMGMGEPLLNYENLLKTLEALHHPQGLDFSGRRITVSTAGVARHLLDLGRTGLCSLAISLHAPTQAQRERIMPGAARLELDKLMDLLAQYPLKPRERLTFEYLLLAGVNDADADARELVRLLSRVKAKVNLIVFNATPGLPYSPPDEARVLAFQDILKSKGLTATLRKSKGSDIAAACGQLRAECDGEGEGEGK.

Glu90 serves as the catalytic Proton acceptor. The Radical SAM core domain maps to 96 to 330; sequence EKDHYTACLS…ATLRKSKGSD (235 aa). An intrachain disulfide couples Cys103 to Cys335. Positions 110, 114, and 117 each coordinate [4Fe-4S] cluster. S-adenosyl-L-methionine-binding positions include 162-163, Ser194, 216-218, and Asn292; these read GE and SLH. Catalysis depends on Cys335, which acts as the S-methylcysteine intermediate.

It belongs to the radical SAM superfamily. RlmN family. It depends on [4Fe-4S] cluster as a cofactor.

It localises to the cytoplasm. It carries out the reaction adenosine(2503) in 23S rRNA + 2 reduced [2Fe-2S]-[ferredoxin] + 2 S-adenosyl-L-methionine = 2-methyladenosine(2503) in 23S rRNA + 5'-deoxyadenosine + L-methionine + 2 oxidized [2Fe-2S]-[ferredoxin] + S-adenosyl-L-homocysteine. The enzyme catalyses adenosine(37) in tRNA + 2 reduced [2Fe-2S]-[ferredoxin] + 2 S-adenosyl-L-methionine = 2-methyladenosine(37) in tRNA + 5'-deoxyadenosine + L-methionine + 2 oxidized [2Fe-2S]-[ferredoxin] + S-adenosyl-L-homocysteine. Functionally, specifically methylates position 2 of adenine 2503 in 23S rRNA and position 2 of adenine 37 in tRNAs. m2A2503 modification seems to play a crucial role in the proofreading step occurring at the peptidyl transferase center and thus would serve to optimize ribosomal fidelity. This Solidesulfovibrio magneticus (strain ATCC 700980 / DSM 13731 / RS-1) (Desulfovibrio magneticus) protein is Dual-specificity RNA methyltransferase RlmN.